A 563-amino-acid chain; its full sequence is RUN and FYVE domain-containing protein 4 (563 aa).

Positions 33–166 (TETSAELHRL…VAFNLDLQRP (134 aa)) constitute an RUN domain. Disordered stretches follow at residues 176–327 (SESR…TTEG) and 375–397 (KKSSPTEKPQEWTGVTSGTMQED). Composition is skewed to basic and acidic residues over residues 196-205 (GFPEEVRCSR) and 263-284 (ETEREGFQLDQKDGGPKPRKFL). Positions 285 to 295 (ENSTASIQQQR) are enriched in polar residues. Basic and acidic residues predominate over residues 297–312 (RAKDVKMQLTGRKVEG). The segment covering 385-396 (EWTGVTSGTMQE) has biased composition (polar residues). Positions 421–462 (QAQCQEQLRAQEAELQALQEQLSRCQKERALLQVKLEQKQQE) form a coiled coil. Residues 428–558 (LRAQEAELQA…RCCPTCAQQE (131 aa)) form an FYVE-type zinc finger. Zn(2+) is bound by residues Cys513, Cys516, Cys529, Cys532, Cys537, Cys540, Cys551, and Cys554.

In terms of assembly, forms homodimers (via coiled coil domain). Forms a ternary complex with RAB7A and LAMP2; the interaction with RAB7A is mediated by RUFY4 (via RUN and coiled coil domains). Interacts with GTP-, but not GDP-bound ARL8A and ARL8B. Interacts with dynactin/DCTN1 and the dynein intermediate chain DYNC1I1/2. As to expression, expressed in dendritic cells.

Its subcellular location is the cytoplasmic vesicle. It localises to the autophagosome. It is found in the lysosome. In terms of biological role, ARL8 effector that promotes the coupling of endolysosomes to dynein-dynactin for retrograde transport along microtubules. Acts by binding both GTP-bound ARL8 and dynein-dynactin. In nonneuronal cells, promotes concentration of endolysosomes in the juxtanuclear area. In hippocampal neurons, drives retrograde transport of endolysosomes from the axon to the soma. Positive regulator of macroautophagy in dendritic cells. Increases autophagic flux, probably by stimulating both autophagosome formation and facilitating tethering with lysosomes. Binds to phosphatidylinositol 3-phosphate (PtdIns3P) through its FYVE-type zinc finger. Positive regulator of osteosclast bone-resorbing activity, possibly by promoting late endosome-lysosome fusion by acting as an adapter protein between RAB7A on late endosomes and LAMP2 on primary lysosomes. The protein is RUN and FYVE domain-containing protein 4 (Rufy4) of Mus musculus (Mouse).